A 322-amino-acid polypeptide reads, in one-letter code: UDP-N-acetylenolpyruvoylglucosamine reductase (322 aa).

The region spanning 36–202 (RAGGPAQVLF…TSVLFEGVPG (167 aa)) is the FAD-binding PCMH-type domain. Residue Arg-182 is part of the active site. The active-site Proton donor is the Ser-231. Residue Glu-301 is part of the active site.

This sequence belongs to the MurB family. FAD serves as cofactor.

It is found in the cytoplasm. The catalysed reaction is UDP-N-acetyl-alpha-D-muramate + NADP(+) = UDP-N-acetyl-3-O-(1-carboxyvinyl)-alpha-D-glucosamine + NADPH + H(+). Its pathway is cell wall biogenesis; peptidoglycan biosynthesis. Cell wall formation. The sequence is that of UDP-N-acetylenolpyruvoylglucosamine reductase from Brucella suis biovar 1 (strain 1330).